Here is a 109-residue protein sequence, read N- to C-terminus: MDMDLNNRLTEDETLEQAYDIFLELAADNLDPADVLLFNLQFEERGGAELFDPAEDWQEHVDFDLNPDFFAEVVIGLADSEDGEINDVFARILLCREKDHKLCHIIWRE.

Belongs to the putative dsDNA mimic protein family.

Its function is as follows. May act as a double-stranded DNA (dsDNA) mimic. Probably regulates the activity of a dsDNA-binding protein. The polypeptide is Putative double-stranded DNA mimic protein YciU (Shigella boydii serotype 18 (strain CDC 3083-94 / BS512)).